Reading from the N-terminus, the 88-residue chain is MGIARILSAVLFLSVLFVVTFPTLLSADHHDGRTDTCRLPSDRGRCKASFERWYFNGTTCTKFVYGGYGGNDNRFPTEKACMKRCAKA.

Residues 1-27 (MGIARILSAVLFLSVLFVVTFPTLLSA) form the signal peptide. A propeptide spanning residues 28 to 33 (DHHDGR) is cleaved from the precursor. A BPTI/Kunitz inhibitor domain is found at 37-85 (CRLPSDRGRCKASFERWYFNGTTCTKFVYGGYGGNDNRFPTEKACMKRC). 2 disulfides stabilise this stretch: C37-C85 and C60-C81.

Belongs to the venom Kunitz-type family. 01 (intermediate) subfamily. Expressed by the venom gland.

Its subcellular location is the secreted. Functionally, serine protease inhibitor that inhibits trypsin at a molar ratio of 1:1. In Cyriopagopus hainanus (Chinese bird spider), this protein is Kunitz-type U15-theraphotoxin-Hhn1r.